Consider the following 276-residue polypeptide: Nickel import system permease protein NikC (276 aa).

5 consecutive transmembrane segments (helical) span residues 10-30, 73-93, 108-128, 186-206, and 238-258; these read LIFFVFVAFIFVVIVLQFFVS, LFVTVLTLIAIVVIGVTLGLF, FIDVGLSIPEFIIMIALASFF, IIPAIIVLMVVDFGKIILYIS, and IMLIAPASVIAITILIFNLTG. The region spanning 69-258 is the ABC transmembrane type-1 domain; that stretch reads ARSTLFVTVL…ITILIFNLTG (190 aa).

Belongs to the binding-protein-dependent transport system permease family. OppBC subfamily. As to quaternary structure, the complex is composed of two ATP-binding proteins (NikD and NikE), two transmembrane proteins (NikB and NikC) and a solute-binding protein (NikA).

It is found in the cell membrane. In terms of biological role, part of the ABC transporter complex NikABCDE (Opp2) involved in nickel import. Probably responsible for the translocation of the substrate across the membrane. The polypeptide is Nickel import system permease protein NikC (Staphylococcus aureus (strain Mu50 / ATCC 700699)).